Consider the following 331-residue polypeptide: Sulfate/thiosulfate import ATP-binding protein CysA (331 aa).

Residues 2–232 (ITVTNARKNY…PANEFVMSFL (231 aa)) form the ABC transporter domain. ATP is bound at residue 34-41 (GPSGSGKS).

This sequence belongs to the ABC transporter superfamily. Sulfate/tungstate importer (TC 3.A.1.6) family. In terms of assembly, the complex is composed of two ATP-binding proteins (CysA), two transmembrane proteins (CysT and CysW) and a solute-binding protein (CysP).

It is found in the cell membrane. It catalyses the reaction sulfate(out) + ATP + H2O = sulfate(in) + ADP + phosphate + H(+). It carries out the reaction thiosulfate(out) + ATP + H2O = thiosulfate(in) + ADP + phosphate + H(+). Functionally, part of the ABC transporter complex CysAWTP involved in sulfate/thiosulfate import. Responsible for energy coupling to the transport system. The sequence is that of Sulfate/thiosulfate import ATP-binding protein CysA from Nocardia farcinica (strain IFM 10152).